The following is a 504-amino-acid chain: Dolichol kinase sec59 (504 aa).

At 1–55 (MYIMSKKCYDTSEKIDREQECVEVNYQHRNFESILEIFSVLFIPFLCNSGKKFLQ) the chain is on the cytoplasmic side. Residues 56-76 (ISNASFFLPACFYLLGSSSII) form a helical membrane-spanning segment. A topological domain (lumenal) is located at residue Gln77. Residues 78–98 (LYEPLLWLSSFPFCILYVGFG) traverse the membrane as a helical segment. Over 99–157 (ENSVLYHEMYTVCLYNALLSLTQRWKWLSIVLDGLGNSSVNLKLHETVILAFLEITQNS) the chain is Cytoplasmic. A helical membrane pass occupies residues 158–178 (FTFIEGILICTGLTGLCFATF). Residues 179–187 (SYEVSPVVS) are Lumenal-facing. A helical transmembrane segment spans residues 188–208 (VLSGVLLISLPTLILLNLCIL). Topologically, residues 209–215 (KLAAKLH) are cytoplasmic. A helical membrane pass occupies residues 216-236 (LSALFTTCLIYFFSALLVFLV). The Lumenal portion of the chain corresponds to 237–263 (SRSWVAGQLGQAPEVWLFNQIFSHRNS). Residues 264-284 (LTRIKIIIWWIICLGCFIFIL) traverse the membrane as a helical segment. Residues 285-325 (LRSNRNNPLGKYFTTEDEVLNFRRKTYHALVVFLFLPVCCL) are Cytoplasmic-facing. Residues 326 to 347 (DPHFLHLSFSGVLFIFLFVEGI) form a helical membrane-spanning segment. The Lumenal segment spans residues 348–373 (RILRLKPFGKMIHEFLWEYTDNRDHK). A helical membrane pass occupies residues 374-394 (GPLIISHIYLLIGCAIPIWLS). Residues 395 to 403 (NALKGPVAS) lie on the Cytoplasmic side of the membrane. A helical transmembrane segment spans residues 404-424 (VELLVGVLCLGCGDSMASIIG). Residues 425 to 440 (KRFGKHRISKTNKSIE) lie on the Lumenal side of the membrane. A helical membrane pass occupies residues 441-461 (GVFAFSISVFLVLHLTQAFHV). A topological domain (cytoplasmic) is located at residue Cys462. Residues 463–483 (PSVTFWKTLFMSLCTAILEGV) form a helical membrane-spanning segment. The Lumenal portion of the chain corresponds to 484 to 504 (STENDNLILPMYMWVLYQALD).

Belongs to the polyprenol kinase family.

Its subcellular location is the endoplasmic reticulum membrane. The catalysed reaction is a di-trans,poly-cis-dolichol + CTP = a di-trans,poly-cis-dolichyl phosphate + CDP + H(+). Its pathway is protein modification; protein glycosylation. Functionally, catalyzes CTP-mediated phosphorylation of dolichol, the terminal step in de novo dolichyl monophosphate (Dol-P) biosynthesis. Dol-P is a lipid carrier essential for the synthesis of N-linked and O-linked oligosaccharides and for GPI anchors. This chain is Dolichol kinase sec59, found in Schizosaccharomyces pombe (strain 972 / ATCC 24843) (Fission yeast).